Here is a 139-residue protein sequence, read N- to C-terminus: Large ribosomal subunit protein uL16 (139 aa).

Basic residues predominate over residues 1–16; the sequence is MLIPKRTKYRKQHRPV. The interval 1-22 is disordered; sequence MLIPKRTKYRKQHRPVRSGMSK.

Belongs to the universal ribosomal protein uL16 family. Part of the 50S ribosomal subunit.

Functionally, binds 23S rRNA and is also seen to make contacts with the A and possibly P site tRNAs. This Bifidobacterium longum (strain DJO10A) protein is Large ribosomal subunit protein uL16.